An 848-amino-acid polypeptide reads, in one-letter code: Trimethylamine-N-oxide reductase 1 (848 aa).

The tat-type signal signal peptide spans Met-1 to Ala-39. Ser-191 contributes to the Mo-bis(molybdopterin guanine dinucleotide) binding site.

It belongs to the prokaryotic molybdopterin-containing oxidoreductase family. As to quaternary structure, interacts with the N-terminal domain of TorC. Mo-bis(molybdopterin guanine dinucleotide) is required as a cofactor. In terms of processing, exported by the Tat system. The position of the signal peptide cleavage has been experimentally proven.

It is found in the periplasm. It catalyses the reaction trimethylamine + 2 Fe(III)-[cytochrome c] + H2O = trimethylamine N-oxide + 2 Fe(II)-[cytochrome c] + 3 H(+). In terms of biological role, reduces trimethylamine-N-oxide (TMAO) into trimethylamine; an anaerobic reaction coupled to energy-yielding reactions. This chain is Trimethylamine-N-oxide reductase 1 (torA), found in Escherichia coli (strain K12).